A 611-amino-acid chain; its full sequence is Leukotriene A-4 hydrolase (611 aa).

Lysine 73 carries the post-translational modification N6-acetyllysine. Residues 135–137 (QCQ) and 267–272 (PYGGME) each bind a peptide. A Zn(2+)-binding site is contributed by histidine 296. Glutamate 297 (proton acceptor) is an active-site residue. Residues histidine 300 and glutamate 319 each coordinate Zn(2+). The residue at position 337 (lysine 337) is an N6-acetyllysine. Residue tyrosine 384 is the Proton donor of the active site. Lysine 414 carries the post-translational modification N6-acetyllysine. Serine 416 carries the phosphoserine modification. 564–566 (RMK) provides a ligand contact to a peptide. An N6-acetyllysine modification is found at lysine 573.

The protein belongs to the peptidase M1 family. In terms of assembly, monomer. The cofactor is Zn(2+). Phosphorylation at Ser-416 inhibits leukotriene-A4 hydrolase activity.

The protein localises to the cytoplasm. The catalysed reaction is leukotriene A4 + H2O = leukotriene B4. The enzyme catalyses (5S,6S)-epoxy-(18R)-hydroxy-(7E,9E,11Z,14Z,16E)-eicosapentaenoate + H2O = resolvin E1. It carries out the reaction (5S,6S)-epoxy-(18S)-hydroxy-(7E,9E,11Z,14Z,16E)-eicosapentaenoate + H2O = 18S-resolvin E1. It catalyses the reaction Release of the N-terminal residue from a tripeptide.. Its pathway is lipid metabolism; leukotriene B4 biosynthesis. Inhibited by bestatin. The epoxide hydrolase activity is restrained by suicide inactivation that involves binding of LTA4 to Tyr-379. 4-(4-benzylphenyl)thiazol-2-amine (ARM1) selectively inhibits the epoxide hydrolase activity. Functionally, bifunctional zinc metalloenzyme that comprises both epoxide hydrolase (EH) and aminopeptidase activities. Acts as an epoxide hydrolase to catalyze the conversion of LTA4 to the pro-inflammatory mediator leukotriene B4 (LTB4). Also has aminopeptidase activity, with high affinity for N-terminal arginines of various synthetic tripeptides. In addition to its pro-inflammatory EH activity, may also counteract inflammation by its aminopeptidase activity, which inactivates by cleavage another neutrophil attractant, the tripeptide Pro-Gly-Pro (PGP), a bioactive fragment of collagen generated by the action of matrix metalloproteinase-9 (MMP9) and prolylendopeptidase (PREPL). Involved also in the biosynthesis of resolvin E1 and 18S-resolvin E1 from eicosapentaenoic acid, two lipid mediators that show potent anti-inflammatory and pro-resolving actions. This Mus musculus (Mouse) protein is Leukotriene A-4 hydrolase (Lta4h).